We begin with the raw amino-acid sequence, 308 residues long: MGGKHVAVLLGGFSSERPVSLSSGNACALALEGEGYKVTRVDVGRDVAAVLDELRPDVAFNALHGPFGEDGTIQGILEYLAIPYTHSGVLASALAMDKAQAKKVAAAAGIPVAGERVMNRFDFTSEHPLQPPYVVKPVREGSSFGVVIVKEDQSHPPQILTSSEWPFGNQVMVERYIHGRELTCGVLDGEALGVTEVVPLGHNFYDYDAKYAAGGSKHVIPAGISPKIYQKIQTLAVMAHQAIGCRGVSRSDFRYDDRFSEDGEVIWLEVNTQPGMTPTSLVPEMAAHAGRSFGDLVSWMVEDASCLR.

One can recognise an ATP-grasp domain in the interval 102-302; sequence KKVAAAAGIP…FGDLVSWMVE (201 aa). Residue 128-183 participates in ATP binding; the sequence is PLQPPYVVKPVREGSSFGVVIVKEDQSHPPQILTSSEWPFGNQVMVERYIHGRELT. 3 residues coordinate Mg(2+): Asp252, Glu269, and Asn271.

Belongs to the D-alanine--D-alanine ligase family. It depends on Mg(2+) as a cofactor. Mn(2+) is required as a cofactor.

The protein resides in the cytoplasm. The catalysed reaction is 2 D-alanine + ATP = D-alanyl-D-alanine + ADP + phosphate + H(+). It functions in the pathway cell wall biogenesis; peptidoglycan biosynthesis. Functionally, cell wall formation. The protein is D-alanine--D-alanine ligase of Agrobacterium fabrum (strain C58 / ATCC 33970) (Agrobacterium tumefaciens (strain C58)).